The chain runs to 227 residues: Protein FAM3C (227 aa).

The signal sequence occupies residues 1-24 (MRVAGAAKLVVAVAVFLLTFYVIS). 2 disulfides stabilise this stretch: Cys58–Cys86 and Cys64–Cys221. Residues 67 to 225 (KHFAFKMASG…VEMEGCIPQK (159 aa)) enclose the GG-type lectin domain.

Belongs to the FAM3 family. As to expression, present in most secretory epithelia (at protein level).

The protein resides in the secreted. Its subcellular location is the cytoplasmic vesicle. Functionally, may be involved in retinal laminar formation. Promotes epithelial to mesenchymal transition. The polypeptide is Protein FAM3C (FAM3C) (Homo sapiens (Human)).